We begin with the raw amino-acid sequence, 396 residues long: Elongation factor Tu (396 aa).

One can recognise a tr-type G domain in the interval 10–206; the sequence is KPHVNIGTIG…AVDNYIPEPE (197 aa). The interval 19-26 is G1; it reads GHVDHGKT. 19–26 lines the GTP pocket; sequence GHVDHGKT. A Mg(2+)-binding site is contributed by Thr26. Residues 60–64 form a G2 region; it reads GITIA. The segment at 81–84 is G3; that stretch reads DCPG. Residues 81–85 and 136–139 contribute to the GTP site; these read DCPGH and NKAD. The interval 136-139 is G4; it reads NKAD. Residues 174-176 form a G5 region; that stretch reads SAL.

It belongs to the TRAFAC class translation factor GTPase superfamily. Classic translation factor GTPase family. EF-Tu/EF-1A subfamily. In terms of assembly, monomer.

It localises to the cytoplasm. It carries out the reaction GTP + H2O = GDP + phosphate + H(+). Its function is as follows. GTP hydrolase that promotes the GTP-dependent binding of aminoacyl-tRNA to the A-site of ribosomes during protein biosynthesis. The polypeptide is Elongation factor Tu (Geobacter sulfurreducens (strain ATCC 51573 / DSM 12127 / PCA)).